The chain runs to 128 residues: Prokineticin-2 (128 aa).

Residues 1-27 form the signal peptide; sequence MRSSRCARLLLLLLLPPLLLTPPAGDA. Cystine bridges form between Cys34-Cys46, Cys40-Cys58, Cys45-Cys106, Cys68-Cys114, and Cys108-Cys124. The interval 71–95 is disordered; the sequence is MTRKNHFGNGRQERRKRKRRRKKKV. The segment covering 83-95 has biased composition (basic residues); it reads ERRKRKRRRKKKV.

It belongs to the AVIT (prokineticin) family.

It is found in the secreted. May function as an output molecule from the suprachiasmatic nucleus (SCN) that transmits behavioral circadian rhythm. May also function locally within the SCN to synchronize output. Potently contracts gastrointestinal (GI) smooth muscle. In Bos taurus (Bovine), this protein is Prokineticin-2 (PROK2).